We begin with the raw amino-acid sequence, 239 residues long: Phosphoribosylaminoimidazole-succinocarboxamide synthase (239 aa).

Belongs to the SAICAR synthetase family.

The catalysed reaction is 5-amino-1-(5-phospho-D-ribosyl)imidazole-4-carboxylate + L-aspartate + ATP = (2S)-2-[5-amino-1-(5-phospho-beta-D-ribosyl)imidazole-4-carboxamido]succinate + ADP + phosphate + 2 H(+). Its pathway is purine metabolism; IMP biosynthesis via de novo pathway; 5-amino-1-(5-phospho-D-ribosyl)imidazole-4-carboxamide from 5-amino-1-(5-phospho-D-ribosyl)imidazole-4-carboxylate: step 1/2. The chain is Phosphoribosylaminoimidazole-succinocarboxamide synthase from Campylobacter hominis (strain ATCC BAA-381 / DSM 21671 / CCUG 45161 / LMG 19568 / NCTC 13146 / CH001A).